The sequence spans 169 residues: Lipoprotein signal peptidase (169 aa).

At 1–9 (MPDVDRFGR) the chain is on the cytoplasmic side. Residues 10–30 (LPWLWITVLVFVLDQVSKAFF) traverse the membrane as a helical segment. The Periplasmic portion of the chain corresponds to 31 to 67 (QAELSMYQQIVVIPDLFSWTLAYNTGAAFSFLADSSG). The helical transmembrane segment at 68-89 (WQRWLFALIAIVVSASLVVWLK) threads the bilayer. The Cytoplasmic portion of the chain corresponds to 90–96 (RLKKGET). A helical transmembrane segment spans residues 97–118 (WLAIALALVLGGALGNLYDRMV). The Periplasmic segment spans residues 119–140 (LGHVVDFILVHWQNRWYFPAFN). Residues D124 and D143 contribute to the active site. Residues 141-154 (LADSAITVGAVMLA) traverse the membrane as a helical segment. The Cytoplasmic segment spans residues 155–169 (LDMFRSKKSGEAAHG).

It belongs to the peptidase A8 family. In terms of assembly, monomer in the crystal.

It is found in the cell inner membrane. It carries out the reaction Release of signal peptides from bacterial membrane prolipoproteins. Hydrolyzes -Xaa-Yaa-Zaa-|-(S,diacylglyceryl)Cys-, in which Xaa is hydrophobic (preferably Leu), and Yaa (Ala or Ser) and Zaa (Gly or Ala) have small, neutral side chains.. It functions in the pathway protein modification; lipoprotein biosynthesis (signal peptide cleavage). With respect to regulation, inhibited by globomycin. Functionally, this protein specifically catalyzes the removal of signal peptides from prolipoproteins. This Pseudomonas aeruginosa (strain ATCC 15692 / DSM 22644 / CIP 104116 / JCM 14847 / LMG 12228 / 1C / PRS 101 / PAO1) protein is Lipoprotein signal peptidase.